Consider the following 211-residue polypeptide: Metalloproteinase inhibitor 3 (211 aa).

An N-terminal signal peptide occupies residues 1–23 (MTPWLGLIVLLGSWSLGDWGAEA). C24 lines the Zn(2+) pocket. Involved in metalloproteinase-binding regions lie at residues 24–27 (CTCS) and 88–89 (ES). 6 disulfides stabilise this stretch: C24/C91, C26/C118, C36/C143, C145/C192, C150/C155, and C163/C184. Positions 24–143 (CTCSPSHPQD…GLNYRYHLGC (120 aa)) constitute an NTR domain. The tract at residues 105-188 (TGRVYDGKMY…SKHYACIRQK (84 aa)) is mediates interaction with EFEMP1. N-linked (GlcNAc...) asparagine glycosylation occurs at N207.

Belongs to the protease inhibitor I35 (TIMP) family. Interacts with EFEMP1. Interacts with KDR.

The protein resides in the secreted. It localises to the extracellular space. The protein localises to the extracellular matrix. Functionally, mediates a variety of processes including matrix regulation and turnover, inflammation, and angiogenesis, through reversible inhibition of zinc protease superfamily enzymes, primarily matrix metalloproteinases (MMPs). Regulates extracellular matrix (ECM) remodeling through inhibition of matrix metalloproteinases (MMP) including MMP-1, MMP-2, MMP-3, MMP-7, MMP-9, MMP-13, MMP-14 and MMP-15. Additionally, modulates the processing of amyloid precursor protein (APP) and apolipoprotein E receptor ApoER2 by inhibiting two alpha-secretases ADAM10 and ADAM17. Functions as a tumor suppressor and a potent inhibitor of angiogenesis. Exerts its anti-angiogenic effect by directly interacting with vascular endothelial growth factor (VEGF) receptor-2/KDR, preventing its binding to the VEGFA ligand. Selectively induces apoptosis in angiogenic endothelial cells through a caspase-independent cell death pathway. Mechanistically, inhibits matrix-induced focal adhesion kinase PTK2 tyrosine phosphorylation and association with paxillin/PXN and disrupts the incorporation of ITGB3, PTK2 and PXN into focal adhesion contacts on the matrix. The sequence is that of Metalloproteinase inhibitor 3 (TIMP3) from Macaca mulatta (Rhesus macaque).